The sequence spans 215 residues: Urease accessory protein UreG (215 aa).

A disordered region spans residues 1–21 (MNAPASSPARRTKKLPPLRVG). GTP is bound at residue 24 to 31 (GPVGSGKT).

This sequence belongs to the SIMIBI class G3E GTPase family. UreG subfamily. In terms of assembly, homodimer. UreD, UreF and UreG form a complex that acts as a GTP-hydrolysis-dependent molecular chaperone, activating the urease apoprotein by helping to assemble the nickel containing metallocenter of UreC. The UreE protein probably delivers the nickel.

Its subcellular location is the cytoplasm. Facilitates the functional incorporation of the urease nickel metallocenter. This process requires GTP hydrolysis, probably effectuated by UreG. This Burkholderia vietnamiensis (strain G4 / LMG 22486) (Burkholderia cepacia (strain R1808)) protein is Urease accessory protein UreG.